The chain runs to 321 residues: Glucokinase (321 aa).

Position 8-13 (8-13 (GDVGGT)) interacts with ATP.

It belongs to the bacterial glucokinase family.

It localises to the cytoplasm. The catalysed reaction is D-glucose + ATP = D-glucose 6-phosphate + ADP + H(+). This Escherichia fergusonii (strain ATCC 35469 / DSM 13698 / CCUG 18766 / IAM 14443 / JCM 21226 / LMG 7866 / NBRC 102419 / NCTC 12128 / CDC 0568-73) protein is Glucokinase.